Reading from the N-terminus, the 296-residue chain is MSILIDEKTPILVQGITGDKGTFHAKEMIAYGSNVVGGVTPGKGGKTHCGVPVFNTVKEAVEATGATTSITFVAPPFAADAIMEAADAGLKLVCSITDGIPAQDMMRVKRYLRRYPKEKRTMVVGPNCAGIISPGKSMLGIMPGHIYLPGKVGVISRSGTLGYEAAAQMKELGIGISTSVGIGGDPINGSSFLDHLALFEQDPETEAVLMIGEIGGPQEAEASAWIKENFSKPVIGFVAGLTAPKGRRMGHAGAIISATGDSAAEKAEIMRSYGLTVAPDPGSFGSTVADVLARAA.

CoA contacts are provided by residues 17–20 (TGDK), K43, and 96–98 (ITD). Catalysis depends on H251, which acts as the Tele-phosphohistidine intermediate.

This sequence belongs to the succinate/malate CoA ligase alpha subunit family. As to quaternary structure, heterotetramer of two alpha and two beta subunits.

The catalysed reaction is (S)-malate + ATP + CoA = (S)-malyl-CoA + ADP + phosphate. It participates in one-carbon metabolism; formaldehyde assimilation via serine pathway. This is Malate--CoA ligase subunit alpha (mtkB) from Methylorubrum extorquens (strain ATCC 14718 / DSM 1338 / JCM 2805 / NCIMB 9133 / AM1) (Methylobacterium extorquens).